We begin with the raw amino-acid sequence, 402 residues long: Enoyl-[acyl-carrier-protein] reductase [NADH] (402 aa).

NAD(+) contacts are provided by residues 48-53, 74-75, 111-112, and 140-141; these read GASSGY, FE, DA, and LA. Tyr226 contributes to the substrate binding site. The active-site Proton donor is the Tyr236. NAD(+) is bound by residues Lys245 and 274–276; that span reads VVT.

It belongs to the TER reductase family. As to quaternary structure, monomer.

The catalysed reaction is a 2,3-saturated acyl-[ACP] + NAD(+) = a (2E)-enoyl-[ACP] + NADH + H(+). It functions in the pathway lipid metabolism; fatty acid biosynthesis. In terms of biological role, involved in the final reduction of the elongation cycle of fatty acid synthesis (FAS II). Catalyzes the reduction of a carbon-carbon double bond in an enoyl moiety that is covalently linked to an acyl carrier protein (ACP). The sequence is that of Enoyl-[acyl-carrier-protein] reductase [NADH] from Xanthomonas campestris pv. campestris (strain 8004).